The following is a 437-amino-acid chain: GTPase Obg (437 aa).

The region spanning 2 to 160 is the Obg domain; the sequence is SMFLDTAKIS…RQLELELKIL (159 aa). An OBG-type G domain is found at 161 to 338; sequence ADVGLVGFPS…LLEATAELLA (178 aa). Residues 167 to 174, 192 to 196, 214 to 217, 284 to 287, and 319 to 321 each bind GTP; these read GFPSVGKS, FTTIV, DLPG, NKMD, and SSL. Mg(2+) is bound by residues Ser-174 and Thr-194. Residues 359–437 enclose the OCT domain; that stretch reads GFAEAEKEFE…IGKFEFEFVD (79 aa).

The protein belongs to the TRAFAC class OBG-HflX-like GTPase superfamily. OBG GTPase family. Monomer. Mg(2+) is required as a cofactor.

The protein localises to the cytoplasm. An essential GTPase which binds GTP, GDP and possibly (p)ppGpp with moderate affinity, with high nucleotide exchange rates and a fairly low GTP hydrolysis rate. Plays a role in control of the cell cycle, stress response, ribosome biogenesis and in those bacteria that undergo differentiation, in morphogenesis control. The protein is GTPase Obg of Streptococcus pyogenes serotype M28 (strain MGAS6180).